We begin with the raw amino-acid sequence, 685 residues long: Heat shock protein homolog SSE1 (685 aa).

The segment at 651-685 (QALRSNQEASKMADLSAKLAAQRKAEAEAKENAKE) is disordered. Over residues 673-685 (RKAEAEAKENAKE) the composition is skewed to basic and acidic residues.

This sequence belongs to the heat shock protein 70 family.

It is found in the cytoplasm. The polypeptide is Heat shock protein homolog SSE1 (SSE1) (Naumovozyma castellii (Yeast)).